A 240-amino-acid chain; its full sequence is Ubiquinone biosynthesis O-methyltransferase (240 aa).

Residues R44, G64, D85, and M129 each coordinate S-adenosyl-L-methionine.

The protein belongs to the methyltransferase superfamily. UbiG/COQ3 family.

It catalyses the reaction a 3-demethylubiquinol + S-adenosyl-L-methionine = a ubiquinol + S-adenosyl-L-homocysteine + H(+). The catalysed reaction is a 3-(all-trans-polyprenyl)benzene-1,2-diol + S-adenosyl-L-methionine = a 2-methoxy-6-(all-trans-polyprenyl)phenol + S-adenosyl-L-homocysteine + H(+). The protein operates within cofactor biosynthesis; ubiquinone biosynthesis. In terms of biological role, O-methyltransferase that catalyzes the 2 O-methylation steps in the ubiquinone biosynthetic pathway. This Escherichia coli O81 (strain ED1a) protein is Ubiquinone biosynthesis O-methyltransferase.